A 326-amino-acid chain; its full sequence is JNK1/MAPK8-associated membrane protein homolog (326 aa).

At 1–71 (MSSLSGHAST…CESCDTPLQP (71 aa)) the chain is on the lumenal side. N27 carries N-linked (GlcNAc...) asparagine glycosylation. Residues 72-92 (YDWMYLLFIALLPLLLHMQFI) traverse the membrane as a helical segment. Over 93-108 (RIARKYCRTRYYEVSE) the chain is Cytoplasmic. Residues 109–129 (YLCVILENVIACVIAVLIYPP) traverse the membrane as a helical segment. The Lumenal segment spans residues 130 to 166 (RFTFFLNGCSKTDIKEWYPACYNPRIGYTKTMRCTYE). A helical transmembrane segment spans residues 167-187 (VVFPLYSITFIHHLILIGSIL). The Cytoplasmic portion of the chain corresponds to 188 to 208 (VLRSTLYCVLLYKTYNGKPFY). Transmembrane regions (helical) follow at residues 209-229 (AAIVSVPILAVIHAVLSGVVF) and 230-250 (YTFPYILLIGSLWAMCFHLAL). Residues 251–269 (EGKRPLKEMIVRIATSPTH) lie on the Cytoplasmic side of the membrane. Residues 270–290 (LIFLSITMLMLSFGVIAIIAP) traverse the membrane as a helical segment. Over 291–296 (LDIPYR) the chain is Lumenal. The helical transmembrane segment at 297–317 (WSFLCIVPVPFIFYMATIPFS) threads the bilayer. Topologically, residues 318 to 326 (NPTTTMRLS) are cytoplasmic.

The protein localises to the endoplasmic reticulum membrane. Facilitates degradation of misfolded endoplasmic reticulum (ER) proteins through the recruitment of components of the proteasome and endoplasmic reticulum-associated degradation (ERAD) system. Involved in ER stress response. In Caenorhabditis elegans, this protein is JNK1/MAPK8-associated membrane protein homolog.